We begin with the raw amino-acid sequence, 101 residues long: Enhancer of yellow 2 transcription factor (101 aa).

It belongs to the ENY2 family. Component of the nuclear pore complex (NPC)-associated AMEX complex (anchoring and mRNA export complex), composed of at least e(y)2 and xmas-2. Component of the SAGA transcription coactivator-HAT complexes, at least composed of Ada2b, e(y)2, Pcaf/Gcn5, Taf10 and Nipped-A/Trrap. Within the SAGA complex, e(y)2, Sgf11, and not/nonstop form an additional subcomplex of SAGA called the DUB module (deubiquitination module). Component of the THO complex, composed of at least e(y)2, HPR1, THO2, THOC5, THOC6 and THOC7. Interacts with e(y)1. Interacts with su(Hw) (via zinc fingers). Interacts with xmas-2; required for localization to the nuclear periphery. Interacts with the nuclear pore complex (NPC).

Its subcellular location is the nucleus. It localises to the nucleoplasm. The protein localises to the cytoplasm. Functionally, involved in mRNA export coupled transcription activation by association with both the AMEX and the SAGA complexes. The SAGA complex is a multiprotein complex that activates transcription by remodeling chromatin and mediating histone acetylation and deubiquitination. Within the SAGA complex, participates in a subcomplex that specifically deubiquitinates histone H2B. The SAGA complex is recruited to specific gene promoters by activators, where it is required for transcription. Required for nuclear receptor-mediated transactivation. Involved in transcription elongation by recruiting the THO complex onto nascent mRNA. The AMEX complex functions in docking export-competent ribonucleoprotein particles (mRNPs) to the nuclear entrance of the nuclear pore complex (nuclear basket). AMEX participates in mRNA export and accurate chromatin positioning in the nucleus by tethering genes to the nuclear periphery. The polypeptide is Enhancer of yellow 2 transcription factor (Drosophila simulans (Fruit fly)).